We begin with the raw amino-acid sequence, 176 residues long: Prion-like protein doppel (176 aa).

An N-terminal signal peptide occupies residues 1 to 25 (MRKHLSWWWLATVCMLLFSHLSAVQ). The interval 27–50 (RGIKHRIKWNRKALPSTAQITEAQ) is flexible tail. Threonine 43 is a glycosylation site (O-linked (GalNAc...) threonine). The globular stretch occupies residues 51–152 (VAENRPGAFI…KHCEFWLERG (102 aa)). Disulfide bonds link cysteine 94/cysteine 145 and cysteine 108/cysteine 140. N-linked (GlcNAc...) asparagine glycans are attached at residues asparagine 98 and asparagine 110. The segment at 122–139 (KPDNKLHQQVLWRLVQEL) is cu(2+) binding. A lipid anchor (GPI-anchor amidated glycine) is attached at glycine 152. Positions 153-176 (AGLRVTMHQPVLLCLLALIWLTVK) are cleaved as a propeptide — removed in mature form.

Belongs to the prion family. Post-translationally, N-glycosylated. N-glycosylated at two distinct sites. O-glycosylated. As to expression, expressed in testis, in Sertoli cells, ejaculated spermatozoa and in seminal fluid (at protein level).

It is found in the cell membrane. In terms of biological role, required for normal acrosome reaction and for normal male fertility. Can bind Cu(2+). The sequence is that of Prion-like protein doppel (PRND) from Homo sapiens (Human).